A 310-amino-acid chain; its full sequence is Transcription initiation factor IIA subunit 1 (310 aa).

Disordered stretches follow at residues 52-78 (AISN…LSTV), 91-197 (IQLN…NNKD), and 218-261 (VIPQ…DDPD). Low complexity-rich tracts occupy residues 62–77 (TTAT…TLST) and 122–160 (SNGT…PSSL). 3 stretches are compositionally biased toward acidic residues: residues 173-183 (TLDESDNDDDN), 225-236 (LNDDDDLDDEEI), and 246-261 (DSLG…DDPD).

This sequence belongs to the TFIIA subunit 1 family. As to quaternary structure, TFIIA is a heterodimer of the large subunit 1 and a small subunit gamma.

The protein resides in the nucleus. Its function is as follows. TFIIA is a component of the transcription machinery of RNA polymerase II and plays an important role in transcriptional activation. TFIIA in a complex with tbp mediates transcriptional activity. This chain is Transcription initiation factor IIA subunit 1 (gtf2a1), found in Dictyostelium discoideum (Social amoeba).